The primary structure comprises 587 residues: Kelch-like protein 3 (587 aa).

The disordered stretch occupies residues 1–24 (MEGESVKPSPQPTEQAGDGEKNRR). Residues 50–117 (CDVMIVAEDV…IYTAEIEVTE (68 aa)) enclose the BTB domain. The region spanning 152–254 (CLGIRAFADV…PRDYLVQTVE (103 aa)) is the BACK domain. Thr-295 is modified (phosphothreonine). Kelch repeat units lie at residues 302 to 347 (VMIV…FMAG), 348 to 394 (HVYA…VLND), 396 to 441 (LYAV…VVEG), 442 to 490 (KLYA…VLSG), 491 to 537 (QLYA…AVNG), and 539 to 585 (LYVV…VSAS). The residue at position 375 (Thr-375) is a Phosphothreonine. Ser-376 and Ser-433 each carry phosphoserine.

The protein belongs to the KLHL3 family. In terms of assembly, homodimer. Component of the BCR(KLHL3) E3 ubiquitin ligase complex, at least composed of CUL3 and KLHL3 and RBX1. Interacts with CLDN8. In terms of processing, phosphorylation at Ser-433 by PKA or PKC decreases the interaction with WNK1 and WNK4, leading to inhibit their degradation by the BCR(KLHL3) complex. Phosphorylated at Ser-433 by PKC in response to angiotensin II signaling, decreasing ability to promote degradation of WNK1 and WNK4, leading to activation of Na-Cl cotransporter SLC12A3/NCC. Phosphorylation at Ser-433 is increased by insulin. Dephosphorylated at Ser-433 by calcineurin PPP3CA, promoting degradation of WNK1 and WNK4.

It localises to the cytoplasm. It is found in the cytoskeleton. The protein resides in the cytosol. It participates in protein modification; protein ubiquitination. Substrate-specific adapter of a BCR (BTB-CUL3-RBX1) E3 ubiquitin ligase complex that acts as a regulator of ion transport in the distal nephron. The BCR(KLHL3) complex acts by mediating ubiquitination and degradation of WNK1 and WNK4, two activators of Na-Cl cotransporter SLC12A3/NCC in distal convoluted tubule cells of kidney, thereby regulating NaCl reabsorption. The BCR(KLHL3) complex also mediates ubiquitination and degradation of WNK3. The BCR(KLHL3) complex also mediates ubiquitination of CLDN8, a tight-junction protein required for paracellular chloride transport in the kidney, leading to its degradation. In Rattus norvegicus (Rat), this protein is Kelch-like protein 3 (Klhl3).